Here is a 900-residue protein sequence, read N- to C-terminus: Bifunctional uridylyltransferase/uridylyl-removing enzyme (900 aa).

The interval 1–342 (MPQVDPELFD…PCEQPVQIQP (342 aa)) is uridylyltransferase. The segment at 343–705 (LNSRFQLRDG…TTQREFESGS (363 aa)) is uridylyl-removing. The HD domain maps to 461 to 583 (VDAHTLNLIK…VGDQTHLDYL (123 aa)). 2 ACT domains span residues 706–789 (QIFI…IIQR) and 816–891 (VLEV…DNGR).

This sequence belongs to the GlnD family. It depends on Mg(2+) as a cofactor.

The catalysed reaction is [protein-PII]-L-tyrosine + UTP = [protein-PII]-uridylyl-L-tyrosine + diphosphate. It carries out the reaction [protein-PII]-uridylyl-L-tyrosine + H2O = [protein-PII]-L-tyrosine + UMP + H(+). Its activity is regulated as follows. Uridylyltransferase (UTase) activity is inhibited by glutamine, while glutamine activates uridylyl-removing (UR) activity. Modifies, by uridylylation and deuridylylation, the PII regulatory proteins (GlnB and homologs), in response to the nitrogen status of the cell that GlnD senses through the glutamine level. Under low glutamine levels, catalyzes the conversion of the PII proteins and UTP to PII-UMP and PPi, while under higher glutamine levels, GlnD hydrolyzes PII-UMP to PII and UMP (deuridylylation). Thus, controls uridylylation state and activity of the PII proteins, and plays an important role in the regulation of nitrogen assimilation and metabolism. The polypeptide is Bifunctional uridylyltransferase/uridylyl-removing enzyme (Pseudomonas aeruginosa (strain ATCC 15692 / DSM 22644 / CIP 104116 / JCM 14847 / LMG 12228 / 1C / PRS 101 / PAO1)).